Reading from the N-terminus, the 263-residue chain is Probable septum site-determining protein MinC (263 aa).

The disordered stretch occupies residues 107–159 (LPPSGARERPLDIKDSAPRKPAEEPSPSAGEARPEPAKAEEKPADPVSRPTKV). Composition is skewed to basic and acidic residues over residues 112 to 129 (ARER…KPAE) and 138 to 150 (ARPE…EKPA).

This sequence belongs to the MinC family. As to quaternary structure, interacts with MinD and FtsZ.

Cell division inhibitor that blocks the formation of polar Z ring septums. Rapidly oscillates between the poles of the cell to destabilize FtsZ filaments that have formed before they mature into polar Z rings. Prevents FtsZ polymerization. This Pseudomonas aeruginosa (strain UCBPP-PA14) protein is Probable septum site-determining protein MinC.